Reading from the N-terminus, the 124-residue chain is Transmembrane protein 141 (124 aa).

2 consecutive transmembrane segments (helical) span residues 29–48 and 60–78; these read YAFM…IFFG and LQWN…SYSV. The disordered stretch occupies residues 97 to 124; it reads NIPDRNSDKEEPETSADSTTTQHEDVLE.

Belongs to the TMEM141 family.

The protein resides in the membrane. This chain is Transmembrane protein 141 (tmem141), found in Danio rerio (Zebrafish).